We begin with the raw amino-acid sequence, 874 residues long: Leucine--tRNA ligase (874 aa).

A 'HIGH' region motif is present at residues 47 to 57 (PYPSGKLHMGH). Residues 636–640 (KMSKS) carry the 'KMSKS' region motif. Position 639 (Lys-639) interacts with ATP.

The protein belongs to the class-I aminoacyl-tRNA synthetase family.

The protein resides in the cytoplasm. It carries out the reaction tRNA(Leu) + L-leucine + ATP = L-leucyl-tRNA(Leu) + AMP + diphosphate. This is Leucine--tRNA ligase from Acinetobacter baumannii (strain SDF).